The sequence spans 238 residues: Ribitol-5-phosphate cytidylyltransferase 2 (238 aa).

Residues 7 to 10 (LAGG) and 81 to 87 (GTDRNET) each bind CTP.

Belongs to the IspD/TarI cytidylyltransferase family. TarI subfamily.

It carries out the reaction D-ribitol 5-phosphate + CTP + H(+) = CDP-L-ribitol + diphosphate. Its pathway is cell wall biogenesis; poly(ribitol phosphate) teichoic acid biosynthesis. Functionally, catalyzes the transfer of the cytidylyl group of CTP to D-ribitol 5-phosphate. The protein is Ribitol-5-phosphate cytidylyltransferase 2 of Staphylococcus aureus (strain bovine RF122 / ET3-1).